We begin with the raw amino-acid sequence, 514 residues long: Light-independent protochlorophyllide reductase subunit B (514 aa).

Aspartate 36 is a [4Fe-4S] cluster binding site. The active-site Proton donor is aspartate 300. Glycine 435–methionine 436 provides a ligand contact to substrate.

It belongs to the ChlB/BchB/BchZ family. As to quaternary structure, protochlorophyllide reductase is composed of three subunits; ChlL, ChlN and ChlB. Forms a heterotetramer of two ChlB and two ChlN subunits. The cofactor is [4Fe-4S] cluster.

The protein resides in the plastid. The protein localises to the chloroplast. The catalysed reaction is chlorophyllide a + oxidized 2[4Fe-4S]-[ferredoxin] + 2 ADP + 2 phosphate = protochlorophyllide a + reduced 2[4Fe-4S]-[ferredoxin] + 2 ATP + 2 H2O. The protein operates within porphyrin-containing compound metabolism; chlorophyll biosynthesis (light-independent). Functionally, component of the dark-operative protochlorophyllide reductase (DPOR) that uses Mg-ATP and reduced ferredoxin to reduce ring D of protochlorophyllide (Pchlide) to form chlorophyllide a (Chlide). This reaction is light-independent. The NB-protein (ChlN-ChlB) is the catalytic component of the complex. In Pleurastrum terricola (Filamentous green alga), this protein is Light-independent protochlorophyllide reductase subunit B.